The primary structure comprises 360 residues: NADP-dependent alcohol dehydrogenase 6 (360 aa).

Position 46 (C46) interacts with Zn(2+). G47 and H51 together coordinate NADP(+). H68, C100, C103, C106, and C114 together coordinate Zn(2+). S131 carries the phosphoserine modification. Zn(2+) is bound at residue C163. NADP(+)-binding residues include L188, G190, I191, S210, R211, K215, C250, S252, T255, D256, I275, I277, Y298, S299, L301, and R348. A Phosphoserine modification is found at S359.

The protein belongs to the zinc-containing alcohol dehydrogenase family. In terms of assembly, homodimer. Zn(2+) is required as a cofactor.

The protein localises to the cytoplasm. It localises to the nucleus. The enzyme catalyses a primary alcohol + NADP(+) = an aldehyde + NADPH + H(+). The catalysed reaction is (E)-cinnamyl alcohol + NADP(+) = (E)-cinnamaldehyde + NADPH + H(+). It catalyses the reaction hexan-1-ol + NADP(+) = hexanal + NADPH + H(+). It carries out the reaction 3-methylbutanol + NADP(+) = 3-methylbutanal + NADPH + H(+). The enzyme catalyses S-nitroso-CoA + NADPH + H(+) = sulfinamide-CoA + NADP(+). Its function is as follows. NADP-dependent, medium-chain alcohol dehydrogenase with a broad substrate specificity. Aldehydes exhibited 50-12000 times higher catalytic efficiency than the corresponding alcohols, therefore the major function of the enzyme is as an aldehyde reductase. The enzyme is active towards aromatic and aliphatic (linear and branched-chain) aldehydes. The enzyme is very active towards aromatic aldehydes, such as cinnamaldehyde, benzaldehyde and substituted benzaldehydes, such as veratraldehyde and panisaldehyde. It exhibits low activity towards substituted cinnamaldehydes, such as coniferaldehyde and sinapaldehyde. The enzyme has no activity with ketones, such as acetone or cyclohexanone. For the reverse reaction, linear and branched-chain primary alcohols are substrates, whereas very low activity is found with secondary alcohols, such as butan-2-ol. The enzyme may be physiologically involved in several steps of the lignin degradation pathway, initiated by other microorganisms, in the synthesis of fusel alcohols, products derived from the aminoacidic metabolism, and in the homeostasis of NADP(H). Has the ability to reduce 5-hydroxymethyl furfural (HMF), a furan derivative which is formed during the hydrolysis of lignocellulosic materials, to 5-hydroxymethylfurfuryl alcohol, thereby alleviating the inhibition of the fermentation of lignocellulose hydrolysates by HMF during fuel ethanol production. Also acts as an inhibitor of protein S-nitrosylation by mediating degradation of S-nitroso-coenzyme A (S-nitroso-CoA), a cofactor required to S-nitrosylate proteins. The protein is NADP-dependent alcohol dehydrogenase 6 of Saccharomyces cerevisiae (strain ATCC 204508 / S288c) (Baker's yeast).